We begin with the raw amino-acid sequence, 1140 residues long: MSKRKQFLDSVHHEHVQDFLNFIKLHKDGADPFDLAEILAELQKSQRQDLWDRQLKLLQHSLTVSPSERWITGAEEDAGDMEVEVSEEQIQTMAVIEGVTIVSTVSVDALQEKDNYTTLLKCAQMLNAIESALPLSQTPLQQAIHWLFECWWRRDLQGKEELGWTAFLVCLENTVTLDKPVSELRRLCSLREVLLSVDFGSEKGQQVIDPLLQCFFRASHIKQEEGKRFLAFLFSWNDNFIRMIHETIKNQLQFFPKTLSVHVAEIYFRAWRKASGPFLEEIESACIQDLMQHALLLHRNSPVHSKVRQILTYFHKQKFREGVDEMLHRLYKPVLWKALKATNAEVRANATLLFTEAFPIHDPNMSSEMVDQAVQKQLDLLFALLDDPQPLVRSSAVLGVCSVLARCWEVIPSAVITDLLEKLILQLANDTSSPDVRCSVFMCMSIILDNSLSHPLMEKLLPALKSSLHDSSEKVRVAFVGMLLKIKAARAAKFWKVCSLEHLLARLEMDSAPVSKRIVNLLFNSFFPVNQPETVWCERCVTLIQTNPGAARKFYQHAYLYTAPANIVKLMLVIRKCLNVCIQNAGDEEFASSNKENSTLLEDVLSVQDTSSMASLLEILVILWKSVQKSLMANQEAFKYTTAKFGSSLPQYLKIFQEERCKAPLILLASLLPASALPALRSKVMSHLRSLKAGAAVTTYSQTLECLCSWGQISHIVELIENWLTEAAPVKEQGDEESTGKVHFDVLEESKPDLGLDYLDYMLLRPKTRECLLTLPLDQMRPLHKALNKWKSLLFSSLSGSEVSVAAIETALRAFIFHGRLCIHLQHKFPEEREFLKSLEHSVSWVEKRVLPFLVNSSSDQQLSLSTKIVESCVTVCKNVLRVSVGDSDFRDHLLQHVASVLQTEKGYMCIPHLLALLTEIAHGCLSQKAEGQEDQLSLTIRILTNIFQKVVEILAHRLRKDKEEGQELCCSSEEALHDFLLVTKFTSERSEFMTGVFSSLCAAVIIDISRPLQKISHVEELLMPETVNDLPPLSSTILKVTLGCPAVTRFFLSELSSSIESEAIDSITQWAAVTHILTIIKESDAFIVELKDIAGSVRRQIQNYYNSISENSDDIQRTIYESTVKMLNDVLISCQQTNN.

Residues 460–493 (LLPALKSSLHDSSEKVRVAFVGMLLKIKAARAAK) form an HEAT repeat.

In terms of assembly, component of the condensin-2 complex, which contains the smc2 and smc4 heterodimer, and three non SMC subunits that probably regulate the complex: ncaph2, ncapd3 and ncapg2.

It is found in the nucleus. Functionally, regulatory subunit of the condensin-2 complex, a complex which establishes mitotic chromosome architecture and is involved in physical rigidity of the chromatid axis. Plays a role in the embryonic development of the head and kidney structures. The sequence is that of Condensin-2 complex subunit G2 from Danio rerio (Zebrafish).